The sequence spans 186 residues: Mediator of RNA polymerase II transcription subunit 29 (186 aa).

The segment covering Met1–Gln12 has biased composition (polar residues). The tract at residues Met1 to Gln41 is disordered. Residues Gly25–Gln41 show a composition bias toward low complexity.

Belongs to the Mediator complex subunit 29 family. In terms of assembly, component of the Mediator complex.

The protein resides in the nucleus. Functionally, component of the Mediator complex, a coactivator involved in the regulated transcription of nearly all RNA polymerase II-dependent genes. Mediator functions as a bridge to convey information from gene-specific regulatory proteins to the basal RNA polymerase II transcription machinery. Mediator is recruited to promoters by direct interactions with regulatory proteins and serves as a scaffold for the assembly of a functional preinitiation complex with RNA polymerase II and the general transcription factors. The protein is Mediator of RNA polymerase II transcription subunit 29 (med29) of Xenopus laevis (African clawed frog).